The primary structure comprises 153 residues: UPF0735 ACT domain-containing protein FN1487 (153 aa).

One can recognise an ACT domain in the interval 76–152 (SLHLSLKDRV…GIADIRITGS (77 aa)).

Belongs to the UPF0735 family.

The sequence is that of UPF0735 ACT domain-containing protein FN1487 from Fusobacterium nucleatum subsp. nucleatum (strain ATCC 25586 / DSM 15643 / BCRC 10681 / CIP 101130 / JCM 8532 / KCTC 2640 / LMG 13131 / VPI 4355).